A 285-amino-acid chain; its full sequence is HTH-type transcriptional regulator YofA (285 aa).

In terms of domain architecture, HTH lysR-type spans 1 to 58 (MESGDLKIFQAVAREGSITKAAQMLNYVQSNVTARVHNLEEDLNIRLFHRTNRGMKLT). Residues 18–37 (ITKAAQMLNYVQSNVTARVH) constitute a DNA-binding region (H-T-H motif).

It belongs to the LysR transcriptional regulatory family.

The protein resides in the cytoplasm. Functionally, regulates expression of the cell division protein ftsW, and is essential for cell viability during stationary phase. In Bacillus subtilis (strain 168), this protein is HTH-type transcriptional regulator YofA (yofA).